A 598-amino-acid chain; its full sequence is Potassium voltage-gated channel subfamily A member 5 (598 aa).

Residues 1–89 form a disordered region; that stretch reads MEIALGPLEN…EEGEGDPGLS (89 aa). A tetramerization domain region spans residues 1 to 195; the sequence is MEIALGPLEN…FYQLGDEAME (195 aa). Residues 1–231 lie on the Cytoplasmic side of the membrane; that stretch reads MEIALGPLEN…LIFEYPESSG (231 aa). The segment covering 60–69 has biased composition (pro residues); that stretch reads RPLPPQPPEL. Lys-205 is covalently cross-linked (Glycyl lysine isopeptide (Lys-Gly) (interchain with G-Cter in SUMO)). The helical transmembrane segment at 232 to 253 threads the bilayer; that stretch reads SARAIAIVSVLVILISIITFCL. Residues 254–308 are Extracellular-facing; the sequence is ETLPEFKDERELLRHPPVPHQPPAAPALGANGSGAVAPASGSTVAPLLPRTLADP. The chain crosses the membrane as a helical span at residues 309–330; it reads FFIVETTCVIWFTFELLVRFFA. Cys-331 carries the S-palmitoyl cysteine lipid modification. Residues 331 to 341 lie on the Cytoplasmic side of the membrane; sequence CPSKAEFSRNI. Residues 342-362 form a helical membrane-spanning segment; that stretch reads MNIIDIVAIFPYFITLGTELA. Residues 363–380 lie on the Extracellular side of the membrane; the sequence is EQQPGGGGGGQNGQQAMS. Residues 381–401 traverse the membrane as a helical; Voltage-sensor segment; that stretch reads LAILRVIRLVRVFRIFKLSRH. Residues 402–416 are Cytoplasmic-facing; that stretch reads SKGLQILGKTLQASM. The S4-S5 linker stretch occupies residues 403 to 416; that stretch reads KGLQILGKTLQASM. The helical transmembrane segment at 417-438 threads the bilayer; the sequence is RELGLLIFFLFIGVILFSSAVY. The Extracellular portion of the chain corresponds to 439-452; that stretch reads FAEADNQGTHFSSI. Positions 453–464 form an intramembrane region, helical; the sequence is PDAFWWAVVTMT. A Selectivity filter motif is present at residues 465-470; sequence TVGYGD. Residues 465 to 472 lie within the membrane without spanning it; that stretch reads TVGYGDMR. A helical membrane pass occupies residues 480–508; the sequence is IVGSLCAIAGVLTIALPVPVIVSNFNYFY. Over 509 to 598 the chain is Cytoplasmic; that stretch reads HRETDHEEQA…CLDTSRETDL (90 aa). The disordered stretch occupies residues 517–539; it reads QAALKEEPGSQSRGTSLDAGGQR. Lys-521 is covalently cross-linked (Glycyl lysine isopeptide (Lys-Gly) (interchain with G-Cter in SUMO)). The PDZ-binding motif lies at 596-598; that stretch reads TDL.

This sequence belongs to the potassium channel family. A (Shaker) (TC 1.A.1.2) subfamily. Kv1.5/KCNA5 sub-subfamily. In terms of assembly, homotetramer and heterotetramer of potassium channel proteins. Interacts with DLG1, which enhances channel currents. Forms a ternary complex with DLG1 and CAV3. Interacts with KCNAB1. Interacts with UBE2I. Interacts with XIRP2; the interaction is required for normal action potential configuration in the heart. In terms of processing, glycosylated. Post-translationally, sumoylated on Lys-205, and Lys-521, preferentially with SUMO3. Sumoylation regulates the voltage sensitivity of the channel.

Its subcellular location is the cell membrane. It carries out the reaction K(+)(in) = K(+)(out). Voltage-gated potassium channel that mediates transmembrane potassium transport in excitable membranes. Forms tetrameric potassium-selective channels through which potassium ions pass in accordance with their electrochemical gradient. The channel alternates between opened and closed conformations in response to the voltage difference across the membrane. Can form functional homotetrameric channels and heterotetrameric channels that contain variable proportions of KCNA1, KCNA2, KCNA4, KCNA5, and possibly other family members as well; channel properties depend on the type of alpha subunits that are part of the channel. Channel properties are modulated by cytoplasmic beta subunits that regulate the subcellular location of the alpha subunits and promote rapid inactivation. Homotetrameric channels display rapid activation and slow inactivation. Required for normal electrical conduction including formation of the infranodal ventricular conduction system and normal action potential configuration, as a result of its interaction with XIRP2. May play a role in regulating the secretion of insulin in normal pancreatic islets. The sequence is that of Potassium voltage-gated channel subfamily A member 5 (KCNA5) from Oryctolagus cuniculus (Rabbit).